A 229-amino-acid polypeptide reads, in one-letter code: Non-structural protein P8 (229 aa).

Transmembrane regions (helical) follow at residues 119 to 139 (IIHMTLLIAAVVALLTSVCTL) and 162 to 182 (SLNPMLGVVNLGATFLMMVCA).

Belongs to the orbivirus NS3 family. Forms homooligomers via coiled-coil motif. Interacts with host OPTN; this interaction inhibits innate immune response.

It is found in the host cell membrane. Its subcellular location is the host Golgi apparatus. Plays a role in the inhibition of host innate immune response. Interacts with host OPTN and thus inhibits the recruitment of TBK1 to the host Golgi apparatus. In turn, downstream partner IRF3 cannot be activated and IFN-beta production is impaired. In terms of biological role, facilitates viral particle release either by increasing plasma membrane permeability through a viroporin-like activity or by viral budding. The protein is Non-structural protein P8 (Segment-10) of Antilocapra americana (Pronghorn).